The chain runs to 137 residues: CUB domain-containing protein (137 aa).

An N-terminal signal peptide occupies residues 1-21 (MRLSRAFAWPLLCSIATTVKA). Intrachain disulfides connect cysteine 30-cysteine 51 and cysteine 75-cysteine 96. The 103-residue stretch at 30–132 (CGGHYTDEYG…TFFEIYYFVD (103 aa)) folds into the CUB domain.

This is CUB domain-containing protein from Homo sapiens (Human).